A 333-amino-acid chain; its full sequence is Holliday junction branch migration complex subunit RuvB (333 aa).

The segment at 1–182 is large ATPase domain (RuvB-L); it reads MDERLLSGES…FGVLSRLEYY (182 aa). ATP-binding positions include L21, R22, G63, K66, T67, T68, 129-131, R172, Y182, and R219; that span reads EDF. Residue T67 participates in Mg(2+) binding. A small ATPAse domain (RuvB-S) region spans residues 183-253; the sequence is TVDQLSAIVE…ITQMALELLQ (71 aa). The interval 256–333 is head domain (RuvB-H); sequence KLGLDHIDHK…EHFGMEIPKV (78 aa). DNA contacts are provided by R311 and R316.

Belongs to the RuvB family. As to quaternary structure, homohexamer. Forms an RuvA(8)-RuvB(12)-Holliday junction (HJ) complex. HJ DNA is sandwiched between 2 RuvA tetramers; dsDNA enters through RuvA and exits via RuvB. An RuvB hexamer assembles on each DNA strand where it exits the tetramer. Each RuvB hexamer is contacted by two RuvA subunits (via domain III) on 2 adjacent RuvB subunits; this complex drives branch migration. In the full resolvosome a probable DNA-RuvA(4)-RuvB(12)-RuvC(2) complex forms which resolves the HJ.

It localises to the cytoplasm. It carries out the reaction ATP + H2O = ADP + phosphate + H(+). In terms of biological role, the RuvA-RuvB-RuvC complex processes Holliday junction (HJ) DNA during genetic recombination and DNA repair, while the RuvA-RuvB complex plays an important role in the rescue of blocked DNA replication forks via replication fork reversal (RFR). RuvA specifically binds to HJ cruciform DNA, conferring on it an open structure. The RuvB hexamer acts as an ATP-dependent pump, pulling dsDNA into and through the RuvAB complex. RuvB forms 2 homohexamers on either side of HJ DNA bound by 1 or 2 RuvA tetramers; 4 subunits per hexamer contact DNA at a time. Coordinated motions by a converter formed by DNA-disengaged RuvB subunits stimulates ATP hydrolysis and nucleotide exchange. Immobilization of the converter enables RuvB to convert the ATP-contained energy into a lever motion, pulling 2 nucleotides of DNA out of the RuvA tetramer per ATP hydrolyzed, thus driving DNA branch migration. The RuvB motors rotate together with the DNA substrate, which together with the progressing nucleotide cycle form the mechanistic basis for DNA recombination by continuous HJ branch migration. Branch migration allows RuvC to scan DNA until it finds its consensus sequence, where it cleaves and resolves cruciform DNA. In Bacillus cereus (strain B4264), this protein is Holliday junction branch migration complex subunit RuvB.